The following is a 102-amino-acid chain: Small ribosomal subunit protein uS10 (102 aa).

It belongs to the universal ribosomal protein uS10 family. As to quaternary structure, part of the 30S ribosomal subunit.

Functionally, involved in the binding of tRNA to the ribosomes. This Thermotoga neapolitana (strain ATCC 49049 / DSM 4359 / NBRC 107923 / NS-E) protein is Small ribosomal subunit protein uS10.